The sequence spans 361 residues: MEKKILEYLKRLEEVEVKISDPEIFNNPKEYSSLSREHARLTELKNVYDKVLRHEKILNDDKHALAQEKDPEMIAMLEEGIQSGKSEIEKLYKILENLLVPPDPDDDLNVIMELRAGTGGDEAALFVGDCVRMYHLYASAKGWKYEELSASESDIGGYKEYVMGISGTGVKRLLQYEAGTHRVQRVPETETQGRVHTSAITVAVLPEPAEDDEEVFVDEKDLKIDTFRASGAGGQHVNVTDSAVRITHLPTGVVVTCQDERSQHKNKAKAMRILKARIRDAEMQRRHKEASAMRSAQVGSGDRSERIRTYNFSQNRVTDHRIGLTLYNLDKVMEGDLDTITSALVSHAYHQLFQNGNEENS.

Gln-235 carries the N5-methylglutamine modification.

The protein belongs to the prokaryotic/mitochondrial release factor family. Methylated by PrmC. Methylation increases the termination efficiency of RF1.

It is found in the cytoplasm. Its function is as follows. Peptide chain release factor 1 directs the termination of translation in response to the peptide chain termination codons UAG and UAA. The chain is Peptide chain release factor 1 from Chlamydia felis (strain Fe/C-56) (Chlamydophila felis).